Consider the following 314-residue polypeptide: MGVKNHSTVTEFLLSGLTEQAELQLPLFCLFLGIYTVTVVGNLSMISIIRLNRQLHTPMYYFLSSLSFLDFCYSSVITPKMLSGFLCRDRSISYSGCMIQLFFFCVCVISECYMLAAMACDRYVAICSPLLYRVIMSPRVCSLLVAAVFSVGFTDAVIHGGCILRLSFCGSNIIKHYFCDIVPLIKLSCSSTYIDELLIFVIGGFNMVATSLTIIISYAFILTSILRIHSKKGRCKAFSTCSSHLTAVLMFYGSLMSMYLKPASSSSLTQEKVSSVFYTTVILMLNPLIYSLRNNEVRNALMKLLRRKISLSPG.

Topologically, residues 1–25 are extracellular; it reads MGVKNHSTVTEFLLSGLTEQAELQL. N-linked (GlcNAc...) asparagine glycosylation occurs at Asn-5. A helical transmembrane segment spans residues 26–46; the sequence is PLFCLFLGIYTVTVVGNLSMI. Residues 47–54 lie on the Cytoplasmic side of the membrane; the sequence is SIIRLNRQ. Residues 55–75 traverse the membrane as a helical segment; it reads LHTPMYYFLSSLSFLDFCYSS. Residues 76–99 are Extracellular-facing; sequence VITPKMLSGFLCRDRSISYSGCMI. Cysteines 97 and 189 form a disulfide. Residues 100–120 form a helical membrane-spanning segment; it reads QLFFFCVCVISECYMLAAMAC. Over 121–139 the chain is Cytoplasmic; that stretch reads DRYVAICSPLLYRVIMSPR. A helical membrane pass occupies residues 140-160; that stretch reads VCSLLVAAVFSVGFTDAVIHG. At 161–197 the chain is on the extracellular side; it reads GCILRLSFCGSNIIKHYFCDIVPLIKLSCSSTYIDEL. The chain crosses the membrane as a helical span at residues 198 to 217; sequence LIFVIGGFNMVATSLTIIIS. Over 218–237 the chain is Cytoplasmic; the sequence is YAFILTSILRIHSKKGRCKA. Residues 238 to 258 form a helical membrane-spanning segment; it reads FSTCSSHLTAVLMFYGSLMSM. Residues 259–271 are Extracellular-facing; it reads YLKPASSSSLTQE. The chain crosses the membrane as a helical span at residues 272–292; sequence KVSSVFYTTVILMLNPLIYSL. Topologically, residues 293-314 are cytoplasmic; the sequence is RNNEVRNALMKLLRRKISLSPG.

Belongs to the G-protein coupled receptor 1 family.

Its subcellular location is the cell membrane. Odorant receptor. This chain is Olfactory receptor 8D4 (OR8D4), found in Homo sapiens (Human).